The following is a 171-amino-acid chain: Adenine phosphoribosyltransferase (171 aa).

The protein belongs to the purine/pyrimidine phosphoribosyltransferase family. As to quaternary structure, homodimer.

It localises to the cytoplasm. The catalysed reaction is AMP + diphosphate = 5-phospho-alpha-D-ribose 1-diphosphate + adenine. It functions in the pathway purine metabolism; AMP biosynthesis via salvage pathway; AMP from adenine: step 1/1. Catalyzes a salvage reaction resulting in the formation of AMP, that is energically less costly than de novo synthesis. In Nitrosococcus oceani (strain ATCC 19707 / BCRC 17464 / JCM 30415 / NCIMB 11848 / C-107), this protein is Adenine phosphoribosyltransferase.